We begin with the raw amino-acid sequence, 355 residues long: Peptide chain release factor 1 (355 aa).

The residue at position 233 (Gln-233) is an N5-methylglutamine.

Belongs to the prokaryotic/mitochondrial release factor family. In terms of processing, methylated by PrmC. Methylation increases the termination efficiency of RF1.

The protein localises to the cytoplasm. Its function is as follows. Peptide chain release factor 1 directs the termination of translation in response to the peptide chain termination codons UAG and UAA. In Desulfitobacterium hafniense (strain DSM 10664 / DCB-2), this protein is Peptide chain release factor 1.